Consider the following 674-residue polypeptide: Protein kinase C delta type (674 aa).

In terms of domain architecture, C2 spans 1–106 (MAPFLRISFN…KNNGKAEFWL (106 aa)). 2 positions are modified to phosphothreonine: Thr-43 and Thr-50. Tyr-64 is modified (phosphotyrosine). Ser-130 bears the Phosphoserine mark. Residue Thr-141 is modified to Phosphothreonine. The residue at position 155 (Tyr-155) is a Phosphotyrosine. The Phorbol-ester/DAG-type 1 zinc finger occupies 158-208 (NHEFIATFFGQPTFCSVCKEFVWGLNKQGYKCRQCNAAIHKKCIDKIIGRC). Thr-218 carries the post-translational modification Phosphothreonine. The Phorbol-ester/DAG-type 2 zinc finger occupies 230-280 (PHRFKVYNYMSPTFCDHCGSLLWGLVKQGLKCEDCGMNVHHKCREKVANLC). Ser-299 is modified (phosphoserine; by autocatalysis). Residues Tyr-311 and Tyr-332 each carry the phosphotyrosine; by SRC modification. Residues 347–601 (FTFQKVLGKG…TGNIRIHPFF (255 aa)) form the Protein kinase domain. 353–361 (LGKGSFGKV) provides a ligand contact to ATP. Residue Tyr-372 is modified to Phosphotyrosine. ATP is bound at residue Lys-376. Thr-449 carries the post-translational modification Phosphothreonine. The Proton acceptor role is filled by Asp-471. The residue at position 504 (Ser-504) is a Phosphoserine. Thr-505 carries the post-translational modification Phosphothreonine; by autocatalysis. The residue at position 565 (Tyr-565) is a Phosphotyrosine. One can recognise an AGC-kinase C-terminal domain in the interval 602-673 (KTINWSLLEK…VNPKFEQFLD (72 aa)). Phosphoserine is present on residues Ser-643, Ser-652, and Ser-662.

The protein belongs to the protein kinase superfamily. AGC Ser/Thr protein kinase family. PKC subfamily. As to quaternary structure, interacts with PDPK1 (via N-terminal region). Interacts with RAD9A. Interacts with CDCP1. Interacts with MUC1. Interacts with VASP. Interacts with CAVIN3. Interacts with PRKD2 (via N-terminus and zing-finger domain 1 and 2) in response to oxidative stress; the interaction is independent of PRKD2 tyrosine phosphorylation. Interacts with PLSC3; interaction is enhanced by UV irradiation. Post-translationally, autophosphorylated and/or phosphorylated at Thr-505, within the activation loop; phosphorylation at Thr-505 is not a prerequisite for enzymatic activity. Autophosphorylated at Ser-299. Upon TNFSF10/TRAIL treatment, phosphorylated at Tyr-155; phosphorylation is required for its translocation to the endoplasmic reticulum and cleavage by caspase-3. Phosphorylated at Tyr-311, Tyr-332 and Tyr-565; phosphorylation of Tyr-311 and Tyr-565 following thrombin or zymosan stimulation potentiates its kinase activity. Phosphorylated by protein kinase PDPK1; phosphorylation is inhibited by the apoptotic C-terminal cleavage product of PKN2. Phosphorylated at Tyr-311 through a SYK and SRC mechanism downstream of C-type lectin receptors activation, promoting its activation. In terms of processing, proteolytically cleaved into a catalytic subunit and a regulatory subunit by caspase-3 during apoptosis which results in kinase activation. In terms of tissue distribution, isoform 1 is highly expressed in developing pro- and pre-B-cells and moderately in mature T-cells. Isoform 2 is highly expressed in testis and ovary and at a lower level in thymocytes, brain and kidney.

It is found in the cytoplasm. Its subcellular location is the perinuclear region. The protein localises to the nucleus. It localises to the cell membrane. The protein resides in the mitochondrion. It is found in the endomembrane system. It catalyses the reaction L-seryl-[protein] + ATP = O-phospho-L-seryl-[protein] + ADP + H(+). The enzyme catalyses L-threonyl-[protein] + ATP = O-phospho-L-threonyl-[protein] + ADP + H(+). The catalysed reaction is L-tyrosyl-[protein] + ATP = O-phospho-L-tyrosyl-[protein] + ADP + H(+). With respect to regulation, novel PKCs (PRKCD, PRKCE, PRKCH and PRKCQ) are calcium-insensitive, but activated by diacylglycerol (DAG) and phosphatidylserine. Three specific sites; Thr-505 (activation loop of the kinase domain), Ser-643 (turn motif) and Ser-662 (hydrophobic region), need to be phosphorylated for its full activation. Activated by caspase-3 (CASP3) cleavage during apoptosis. After cleavage, the pseudosubstrate motif in the regulatory subunit is released from the substrate recognition site of the catalytic subunit, which enables PRKCD to become constitutively activated. The catalytic subunit which displays properties of a sphingosine-dependent protein kinase is activated by D-erythro-sphingosine (Sph) or N,N-dimethyl-D-erythrosphingosine (DMS) or N,N,N-trimethyl-D-erythrosphingosine (TMS), but not by ceramide or Sph-1-P and is strongly inhibited by phosphatidylserine. In terms of biological role, calcium-independent, phospholipid- and diacylglycerol (DAG)-dependent serine/threonine-protein kinase that plays contrasting roles in cell death and cell survival by functioning as a pro-apoptotic protein during DNA damage-induced apoptosis, but acting as an anti-apoptotic protein during cytokine receptor-initiated cell death, is involved in tumor suppression, is required for oxygen radical production by NADPH oxidase and acts as a positive or negative regulator in platelet functional responses. Negatively regulates B cell proliferation and also has an important function in self-antigen induced B cell tolerance induction. Upon DNA damage, activates the promoter of the death-promoting transcription factor BCLAF1/Btf to trigger BCLAF1-mediated p53/TP53 gene transcription and apoptosis. In response to oxidative stress, interact with and activate CHUK/IKKA in the nucleus, causing the phosphorylation of p53/TP53. In the case of ER stress or DNA damage-induced apoptosis, can form a complex with the tyrosine-protein kinase ABL1 which trigger apoptosis independently of p53/TP53. In cytosol can trigger apoptosis by activating MAPK11 or MAPK14, inhibiting AKT1 and decreasing the level of X-linked inhibitor of apoptosis protein (XIAP), whereas in nucleus induces apoptosis via the activation of MAPK8 or MAPK9. Upon ionizing radiation treatment, is required for the activation of the apoptosis regulators BAX and BAK, which trigger the mitochondrial cell death pathway. Can phosphorylate MCL1 and target it for degradation which is sufficient to trigger for BAX activation and apoptosis. Is required for the control of cell cycle progression both at G1/S and G2/M phases. Mediates phorbol 12-myristate 13-acetate (PMA)-induced inhibition of cell cycle progression at G1/S phase by up-regulating the CDK inhibitor CDKN1A/p21 and inhibiting the cyclin CCNA2 promoter activity. In response to UV irradiation can phosphorylate CDK1, which is important for the G2/M DNA damage checkpoint activation. Can protect glioma cells from the apoptosis induced by TNFSF10/TRAIL, probably by inducing increased phosphorylation and subsequent activation of AKT1. Can also act as tumor suppressor upon mitogenic stimulation with PMA or TPA. In N-formyl-methionyl-leucyl-phenylalanine (fMLP)-treated cells, is required for NCF1 (p47-phox) phosphorylation and activation of NADPH oxidase activity, and regulates TNF-elicited superoxide anion production in neutrophils, by direct phosphorylation and activation of NCF1 or indirectly through MAPK1/3 (ERK1/2) signaling pathways. Involved in antifungal immunity by mediating phosphorylation and activation of CARD9 downstream of C-type lectin receptors activation, promoting interaction between CARD9 and BCL10, followed by activation of NF-kappa-B and MAP kinase p38 pathways. May also play a role in the regulation of NADPH oxidase activity in eosinophil after stimulation with IL5, leukotriene B4 or PMA. In collagen-induced platelet aggregation, acts a negative regulator of filopodia formation and actin polymerization by interacting with and negatively regulating VASP phosphorylation. Downstream of PAR1, PAR4 and CD36/GP4 receptors, regulates differentially platelet dense granule secretion; acts as a positive regulator in PAR-mediated granule secretion, whereas it negatively regulates CD36/GP4-mediated granule release. Phosphorylates MUC1 in the C-terminal and regulates the interaction between MUC1 and beta-catenin. The catalytic subunit phosphorylates 14-3-3 proteins (YWHAB, YWHAZ and YWHAH) in a sphingosine-dependent fashion. Phosphorylates ELAVL1 in response to angiotensin-2 treatment. Phosphorylates mitochondrial phospholipid scramblase 3 (PLSCR3), resulting in increased cardiolipin expression on the mitochondrial outer membrane which facilitates apoptosis. Phosphorylates SMPD1 which induces SMPD1 secretion. The sequence is that of Protein kinase C delta type from Mus musculus (Mouse).